Here is a 447-residue protein sequence, read N- to C-terminus: Phosphoglucosamine mutase (447 aa).

Residue S104 is the Phosphoserine intermediate of the active site. Residues S104, D243, D245, and D247 each contribute to the Mg(2+) site. S104 is subject to Phosphoserine.

Belongs to the phosphohexose mutase family. Requires Mg(2+) as cofactor. In terms of processing, activated by phosphorylation.

The enzyme catalyses alpha-D-glucosamine 1-phosphate = D-glucosamine 6-phosphate. In terms of biological role, catalyzes the conversion of glucosamine-6-phosphate to glucosamine-1-phosphate. In Corynebacterium glutamicum (strain ATCC 13032 / DSM 20300 / JCM 1318 / BCRC 11384 / CCUG 27702 / LMG 3730 / NBRC 12168 / NCIMB 10025 / NRRL B-2784 / 534), this protein is Phosphoglucosamine mutase.